A 354-amino-acid polypeptide reads, in one-letter code: MASYTLAELAARVGGAVEGDGSLRLDGISPLEEASASEISFFSNRKYRKAFEASRAGAVVVEPDEQVAAGRTVLRVANAYLAFAKISTLFHPPREAVPEVAPTAVIHPTARVHPSAQVMPLACVGPDAQVGARTILFPGVHVADGARVGEDCVFYHNVVVRERCAVGNRVILQPGCVIGSDGFGFAFDPEGEGKGPRHYKVPQVGNVVIEDDVEVGANTCVDRATLGTTRIGRGAKIDNLVQIAHNVQVGPLSLLVSQVGVAGSTKLGMGVVAGGQAGIVGHLEIGDGVRIGAQSGVMADVEAGETVSGSPAVPHGNWLKAMASLDHLHDMRKELRSLRREVERLRADAGEDEP.

The active-site Proton acceptor is the H245.

The protein belongs to the transferase hexapeptide repeat family. LpxD subfamily. In terms of assembly, homotrimer.

The enzyme catalyses a UDP-3-O-[(3R)-3-hydroxyacyl]-alpha-D-glucosamine + a (3R)-hydroxyacyl-[ACP] = a UDP-2-N,3-O-bis[(3R)-3-hydroxyacyl]-alpha-D-glucosamine + holo-[ACP] + H(+). The protein operates within bacterial outer membrane biogenesis; LPS lipid A biosynthesis. Catalyzes the N-acylation of UDP-3-O-acylglucosamine using 3-hydroxyacyl-ACP as the acyl donor. Is involved in the biosynthesis of lipid A, a phosphorylated glycolipid that anchors the lipopolysaccharide to the outer membrane of the cell. The sequence is that of UDP-3-O-acylglucosamine N-acyltransferase from Anaeromyxobacter dehalogenans (strain 2CP-1 / ATCC BAA-258).